The sequence spans 369 residues: Probable methyltransferase TCM_000331 (369 aa).

The S-adenosyl-L-homocysteine site is built by Tyr-18, Cys-60, Asn-65, Asp-98, Leu-99, Ser-137, and Phe-138. Mg(2+) is bound by residues Asn-176, Asp-261, Phe-263, and Asn-264.

The protein belongs to the methyltransferase superfamily. Type-7 methyltransferase family. Mg(2+) serves as cofactor.

This Theobroma cacao (Cacao) protein is Probable methyltransferase TCM_000331.